Consider the following 240-residue polypeptide: 1-(5-phosphoribosyl)-5-[(5-phosphoribosylamino)methylideneamino] imidazole-4-carboxamide isomerase (240 aa).

Asp-8 acts as the Proton acceptor in catalysis. Residue Asp-129 is the Proton donor of the active site.

It belongs to the HisA/HisF family.

The protein localises to the cytoplasm. It catalyses the reaction 1-(5-phospho-beta-D-ribosyl)-5-[(5-phospho-beta-D-ribosylamino)methylideneamino]imidazole-4-carboxamide = 5-[(5-phospho-1-deoxy-D-ribulos-1-ylimino)methylamino]-1-(5-phospho-beta-D-ribosyl)imidazole-4-carboxamide. The protein operates within amino-acid biosynthesis; L-histidine biosynthesis; L-histidine from 5-phospho-alpha-D-ribose 1-diphosphate: step 4/9. This is 1-(5-phosphoribosyl)-5-[(5-phosphoribosylamino)methylideneamino] imidazole-4-carboxamide isomerase from Listeria monocytogenes serotype 4a (strain HCC23).